Here is a 234-residue protein sequence, read N- to C-terminus: GTP cyclohydrolase 1 type 2 homolog (234 aa).

Residues histidine 61, histidine 62, aspartate 80, histidine 195, and glutamate 199 each coordinate a divalent metal cation.

The protein belongs to the GTP cyclohydrolase I type 2/NIF3 family. Homohexamer.

The sequence is that of GTP cyclohydrolase 1 type 2 homolog from Methanothermobacter thermautotrophicus (strain ATCC 29096 / DSM 1053 / JCM 10044 / NBRC 100330 / Delta H) (Methanobacterium thermoautotrophicum).